The chain runs to 404 residues: MDRTQSPKTALFAVLATLLVLTVNGQSLCNTHRFTNNLAFADCSDLSALGSFLHWTYNEQNGTVSIAYRHPGTSASSWVAWGLNPSSTQMVGTQALVAFTNTTTNQFQAYTSSVSSYGTRLERSSLSFGVSGLSATLVSGEVTIFATLELSPNLITANQLWQVGPVVNGVPASHQTSGDNMRSSGRIDFRTGQASAGGGGSGDRLRKRNTHGVLNAVSWGVLMPMGAMMARYMKVFADPTWFYLHIAFQVSGYVIGVAGWATGIKLGNDSPGTSYSTHRNLGIALFTFATLQVFALLVRPKPDHKYRTYWNVYHHTVGYTTIILSIVNIFKGFDILDPEDKWRWAYIGILIFLGACVLILEPLTWFIVLRRKSRGGNTVAAPTSSKYSNGVNGTTTTGPHHQDA.

Residues 1 to 25 (MDRTQSPKTALFAVLATLLVLTVNG) form the signal peptide. One can recognise a DOMON domain in the interval 49–164 (LGSFLHWTYN…ITANQLWQVG (116 aa)). Positions 170–369 (VPASHQTSGD…LEPLTWFIVL (200 aa)) constitute a Cytochrome b561 domain. Residues 172–207 (ASHQTSGDNMRSSGRIDFRTGQASAGGGGSGDRLRK) form a disordered region. Residues 173 to 183 (SHQTSGDNMRS) show a composition bias toward polar residues. A run of 2 helical transmembrane segments spans residues 210–230 (THGV…AMMA) and 241–261 (WFYL…AGWA). Heme b contacts are provided by His-211, His-245, and His-278. Residues 280 to 300 (NLGIALFTFATLQVFALLVRP) traverse the membrane as a helical segment. His-314 is a heme b binding site. Transmembrane regions (helical) follow at residues 316–336 (TVGY…FDIL) and 349–369 (ILIF…FIVL). The interval 376 to 404 (GNTVAAPTSSKYSNGVNGTTTTGPHHQDA) is disordered. Residues 380–404 (AAPTSSKYSNGVNGTTTTGPHHQDA) show a composition bias toward polar residues.

Requires heme b as cofactor.

The protein resides in the membrane. In terms of biological role, may act as a catecholamine-responsive trans-membrane electron transporter. This is Cytochrome b561 and DOMON domain-containing protein At5g35735 from Arabidopsis thaliana (Mouse-ear cress).